Consider the following 368-residue polypeptide: MSLFSTPGGFGTGGGSMFGSTATDNHNPMKDIEVTSPPDDSISCLSFSPPTLPGNFLIAGSWANDVRCWEVQDNGQTIPKAQQMHTGPVLDVCWSDDGSKVFTASCDKTAKMWDLNSNQSIQIAQHDAPIKTVHWVKAPNYSCIMTGSWDKSLKFWDTRSPNPLLTLQLPERCYCADVVYPMAVVATAERGLIVYQLENQPSEFRRIDSPLKHQHRCVAIFKDKQNKPTGFALGSIEGRVAIHYINPPNPAKDNFTFKCHRSNGTNTTAPQDIYAVNGIAFHPVHGTLATVGSDGRFSFWDKDARTKLKTSEQLDQPISACSFNHNGNIFAYSSSYDWSKGHEFYNPQKKNYIFLRNAAEELKPRNKK.

Residues 1 to 37 form a disordered region; sequence MSLFSTPGGFGTGGGSMFGSTATDNHNPMKDIEVTSP. Residues 8–17 show a composition bias toward gly residues; that stretch reads GGFGTGGGSM. WD repeat units lie at residues 37–79, 84–114, 125–157, 168–206, 215–255, 271–301, and 310–346; these read PPDD…QTIP, MHTG…KMWD, QHDA…KFWD, QLPE…EFRR, HRCV…KDNF, QDIY…SFWD, and TSEQ…EFYN.

Belongs to the WD repeat rae1 family.

Its subcellular location is the cytoplasm. It is found in the nucleus. It localises to the cytoskeleton. The protein localises to the spindle pole. Functionally, plays a role in mitotic bipolar spindle formation. Binds mRNA. May function in nucleocytoplasmic transport and in directly or indirectly attaching cytoplasmic mRNPs to the cytoskeleton. In Xenopus tropicalis (Western clawed frog), this protein is mRNA export factor (rae1).